Consider the following 496-residue polypeptide: Glycerol kinase (496 aa).

Thr-12 contacts ADP. ATP contacts are provided by Thr-12, Thr-13, and Ser-14. Thr-12 is a binding site for sn-glycerol 3-phosphate. Position 16 (Arg-16) interacts with ADP. The sn-glycerol 3-phosphate site is built by Arg-82, Glu-83, and Tyr-134. Residues Arg-82, Glu-83, and Tyr-134 each coordinate glycerol. At His-230 the chain carries Phosphohistidine; by HPr. Asp-244 is a sn-glycerol 3-phosphate binding site. Residues Asp-244 and Gln-245 each coordinate glycerol. The ADP site is built by Thr-266 and Gly-309. ATP contacts are provided by Thr-266, Gly-309, Gln-313, and Gly-410. Gly-410 and Asn-414 together coordinate ADP.

It belongs to the FGGY kinase family. In terms of assembly, homotetramer and homodimer (in equilibrium). Post-translationally, the phosphoenolpyruvate-dependent sugar phosphotransferase system (PTS), including enzyme I, and histidine-containing protein (HPr) are required for the phosphorylation, which leads to the activation of the enzyme.

The enzyme catalyses glycerol + ATP = sn-glycerol 3-phosphate + ADP + H(+). Its pathway is polyol metabolism; glycerol degradation via glycerol kinase pathway; sn-glycerol 3-phosphate from glycerol: step 1/1. Activated by phosphorylation and inhibited by fructose 1,6-bisphosphate (FBP). Its function is as follows. Key enzyme in the regulation of glycerol uptake and metabolism. Catalyzes the phosphorylation of glycerol to yield sn-glycerol 3-phosphate. This is Glycerol kinase from Bacillus thuringiensis (strain Al Hakam).